We begin with the raw amino-acid sequence, 70 residues long: UPF0352 protein Sden_2336 (70 aa).

The protein belongs to the UPF0352 family.

The chain is UPF0352 protein Sden_2336 from Shewanella denitrificans (strain OS217 / ATCC BAA-1090 / DSM 15013).